Here is a 278-residue protein sequence, read N- to C-terminus: Ferredoxin--NADP reductase A (278 aa).

The FAD-binding FR-type domain occupies 3–103 (PGYTEETVLE…KRATGTLTIG (101 aa)). Residues 52 to 55 (RAYS) and T118 each bind FAD.

This sequence belongs to the ferredoxin--NADP reductase type 1 family. FAD is required as a cofactor.

It catalyses the reaction 2 reduced [4Fe-4S]-[ferredoxin] + NADP(+) + H(+) = 2 oxidized [4Fe-4S]-[ferredoxin] + NADPH. Its function is as follows. Transports electrons between NADPH and ferredoxin. Can transfer electrons to ferredoxins Fdx2 and Fdx8. Prefers NADPH to NADH. This is Ferredoxin--NADP reductase A from Sorangium cellulosum (strain So ce56) (Polyangium cellulosum (strain So ce56)).